A 346-amino-acid polypeptide reads, in one-letter code: Dihydroorotase (346 aa).

Zn(2+) is bound by residues His14 and His16. Residues 16-18 and Asn42 each bind substrate; that span reads HLR. The Zn(2+) site is built by Lys100, His137, and His175. Position 100 is an N6-carboxylysine (Lys100). His137 provides a ligand contact to substrate. Leu220 contributes to the substrate binding site. Asp248 is a Zn(2+) binding site. Asp248 is a catalytic residue. Substrate-binding residues include His252 and Ala264.

It belongs to the metallo-dependent hydrolases superfamily. DHOase family. Class II DHOase subfamily. In terms of assembly, homodimer. Zn(2+) is required as a cofactor.

It catalyses the reaction (S)-dihydroorotate + H2O = N-carbamoyl-L-aspartate + H(+). The protein operates within pyrimidine metabolism; UMP biosynthesis via de novo pathway; (S)-dihydroorotate from bicarbonate: step 3/3. Catalyzes the reversible cyclization of carbamoyl aspartate to dihydroorotate. In Novosphingobium aromaticivorans (strain ATCC 700278 / DSM 12444 / CCUG 56034 / CIP 105152 / NBRC 16084 / F199), this protein is Dihydroorotase.